We begin with the raw amino-acid sequence, 447 residues long: Asparagine--tRNA ligase (447 aa).

The protein belongs to the class-II aminoacyl-tRNA synthetase family. In terms of assembly, homodimer.

It localises to the cytoplasm. It catalyses the reaction tRNA(Asn) + L-asparagine + ATP = L-asparaginyl-tRNA(Asn) + AMP + diphosphate + H(+). This Herpetosiphon aurantiacus (strain ATCC 23779 / DSM 785 / 114-95) protein is Asparagine--tRNA ligase.